The following is a 336-amino-acid chain: Holliday junction branch migration complex subunit RuvB (336 aa).

Positions 4–184 (SDRLISSQSI…FGIVQRLEYY (181 aa)) are large ATPase domain (RuvB-L). ATP contacts are provided by residues Ile-23, Arg-24, Gly-65, Lys-68, Thr-69, Thr-70, 131 to 133 (EDY), Arg-174, Tyr-184, and Arg-221. Thr-69 is a binding site for Mg(2+). Positions 185 to 255 (SVDSLTQIVA…MAQQALEMLE (71 aa)) are small ATPAse domain (RuvB-S). The interval 258-336 (QHGFDLMDRK…HFGFSAIEQE (79 aa)) is head domain (RuvB-H). DNA contacts are provided by Arg-313 and Arg-318.

The protein belongs to the RuvB family. As to quaternary structure, homohexamer. Forms an RuvA(8)-RuvB(12)-Holliday junction (HJ) complex. HJ DNA is sandwiched between 2 RuvA tetramers; dsDNA enters through RuvA and exits via RuvB. An RuvB hexamer assembles on each DNA strand where it exits the tetramer. Each RuvB hexamer is contacted by two RuvA subunits (via domain III) on 2 adjacent RuvB subunits; this complex drives branch migration. In the full resolvosome a probable DNA-RuvA(4)-RuvB(12)-RuvC(2) complex forms which resolves the HJ.

Its subcellular location is the cytoplasm. It carries out the reaction ATP + H2O = ADP + phosphate + H(+). Its function is as follows. The RuvA-RuvB-RuvC complex processes Holliday junction (HJ) DNA during genetic recombination and DNA repair, while the RuvA-RuvB complex plays an important role in the rescue of blocked DNA replication forks via replication fork reversal (RFR). RuvA specifically binds to HJ cruciform DNA, conferring on it an open structure. The RuvB hexamer acts as an ATP-dependent pump, pulling dsDNA into and through the RuvAB complex. RuvB forms 2 homohexamers on either side of HJ DNA bound by 1 or 2 RuvA tetramers; 4 subunits per hexamer contact DNA at a time. Coordinated motions by a converter formed by DNA-disengaged RuvB subunits stimulates ATP hydrolysis and nucleotide exchange. Immobilization of the converter enables RuvB to convert the ATP-contained energy into a lever motion, pulling 2 nucleotides of DNA out of the RuvA tetramer per ATP hydrolyzed, thus driving DNA branch migration. The RuvB motors rotate together with the DNA substrate, which together with the progressing nucleotide cycle form the mechanistic basis for DNA recombination by continuous HJ branch migration. Branch migration allows RuvC to scan DNA until it finds its consensus sequence, where it cleaves and resolves cruciform DNA. The sequence is that of Holliday junction branch migration complex subunit RuvB from Legionella pneumophila subsp. pneumophila (strain Philadelphia 1 / ATCC 33152 / DSM 7513).